A 219-amino-acid chain; its full sequence is Ion-translocating oxidoreductase complex subunit G (219 aa).

A helical membrane pass occupies residues 25-45 (GLLLGLFSLVSALMLALASDA). Thr187 is subject to FMN phosphoryl threonine.

Belongs to the RnfG family. The complex is composed of six subunits: RnfA, RnfB, RnfC, RnfD, RnfE and RnfG. Requires FMN as cofactor.

It is found in the cellular chromatophore membrane. Part of a membrane-bound complex that couples electron transfer with translocation of ions across the membrane. The protein is Ion-translocating oxidoreductase complex subunit G of Cereibacter sphaeroides (strain ATCC 17029 / ATH 2.4.9) (Rhodobacter sphaeroides).